The primary structure comprises 340 residues: Agmatinase, mitochondrial (340 aa).

The Mn(2+) site is built by H150, D173, H175, D177, D264, and D266.

It belongs to the arginase family. Agmatinase subfamily. Requires Mn(2+) as cofactor.

It is found in the mitochondrion. It catalyses the reaction agmatine + H2O = urea + putrescine. The protein operates within amine and polyamine biosynthesis; putrescine biosynthesis via agmatine pathway; putrescine from agmatine: step 1/1. The chain is Agmatinase, mitochondrial (AGMAT) from Gallus gallus (Chicken).